The primary structure comprises 257 residues: Transmembrane protein C257L (257 aa).

The next 2 membrane-spanning stretches (helical) occupy residues 123–143 (LELL…FTAL) and 163–183 (MMIF…YVLV).

The protein belongs to the asfivirus C257R family.

The protein localises to the host membrane. It localises to the virion. This African swine fever virus (isolate Tick/South Africa/Pretoriuskop Pr4/1996) (ASFV) protein is Transmembrane protein C257L.